The sequence spans 450 residues: Chromosomal replication initiator protein DnaA (450 aa).

Residues 1–84 (MTENEQIFWN…AVDYVYEEDL (84 aa)) form a domain I, interacts with DnaA modulators region. The domain II stretch occupies residues 84–109 (LIIEQQHQGQQGYTEQAFQQLPAVQS). The segment at 110-328 (DLNPKYSFDN…GALKDISLVA (219 aa)) is domain III, AAA+ region. ATP is bound by residues G154, G156, K157, and T158. The domain IV, binds dsDNA stretch occupies residues 329-450 (NFKQIDTITV…EIETIKNKIK (122 aa)).

Belongs to the DnaA family. In terms of assembly, oligomerizes as a right-handed, spiral filament on DNA at oriC.

The protein resides in the cytoplasm. In terms of biological role, plays an essential role in the initiation and regulation of chromosomal replication. ATP-DnaA binds to the origin of replication (oriC) to initiate formation of the DNA replication initiation complex once per cell cycle. Binds the DnaA box (a 9 base pair repeat at the origin) and separates the double-stranded (ds)DNA. Forms a right-handed helical filament on oriC DNA; dsDNA binds to the exterior of the filament while single-stranded (ss)DNA is stabiized in the filament's interior. The ATP-DnaA-oriC complex binds and stabilizes one strand of the AT-rich DNA unwinding element (DUE), permitting loading of DNA polymerase. After initiation quickly degrades to an ADP-DnaA complex that is not apt for DNA replication. Binds acidic phospholipids. The chain is Chromosomal replication initiator protein DnaA from Streptococcus equi subsp. zooepidemicus (strain MGCS10565).